A 407-amino-acid polypeptide reads, in one-letter code: Methylthioribose kinase (407 aa).

ATP-binding positions include N40, K57, and 111-113; that span reads EDL. A substrate-binding site is contributed by D229. 246-248 provides a ligand contact to ATP; it reads DAE. Residue R344 coordinates substrate.

This sequence belongs to the methylthioribose kinase family. Homodimer.

It carries out the reaction 5-(methylsulfanyl)-D-ribose + ATP = 5-(methylsulfanyl)-alpha-D-ribose 1-phosphate + ADP + H(+). It participates in amino-acid biosynthesis; L-methionine biosynthesis via salvage pathway; S-methyl-5-thio-alpha-D-ribose 1-phosphate from S-methyl-5'-thioadenosine (hydrolase route): step 2/2. Its function is as follows. Catalyzes the phosphorylation of methylthioribose into methylthioribose-1-phosphate. The chain is Methylthioribose kinase from Yersinia pseudotuberculosis serotype O:3 (strain YPIII).